A 453-amino-acid chain; its full sequence is DDB1- and CUL4-associated factor 12 (453 aa).

The span at 1 to 12 (MARKVVSRKRKA) shows a compositional bias: basic residues. Residues 1-34 (MARKVVSRKRKAPASPGAGSDAQGPQFGWDHSLH) are disordered. The required for nuclear location and interaction with MOV10 stretch occupies residues 1–38 (MARKVVSRKRKAPASPGAGSDAQGPQFGWDHSLHKRKR). The residue at position 15 (serine 15) is a Phosphoserine. WD repeat units lie at residues 81-122 (EREF…TSQI), 123-175 (TKIP…TLDP), 176-242 (VCVG…ALKD), 243-286 (IPKE…NTLS), 287-331 (KLLS…SYNV), and 332-366 (KSVC…LFYD).

This sequence belongs to the WD repeat DCAF12 family. As to quaternary structure, component of the DCX(DCAF12) E3 ubiquitin ligase complex, at least composed of CUL4 (CUL4A or CUL4B), DDB1, DCAF12 and RBX1. Highly expressed in lung cancer tissues and some cancer cell lines. Restricted expression in normal testis.

The protein resides in the cytoplasm. It is found in the cytoskeleton. The protein localises to the microtubule organizing center. Its subcellular location is the centrosome. It localises to the nucleus. It participates in protein modification; protein ubiquitination. In terms of biological role, substrate-recognition component of a DCX (DDB1-CUL4-X-box) E3 ubiquitin-protein ligase complex of the DesCEND (destruction via C-end degrons) pathway, which recognizes a C-degron located at the extreme C terminus of target proteins, leading to their ubiquitination and degradation. The C-degron recognized by the DesCEND pathway is usually a motif of less than ten residues and can be present in full-length proteins, truncated proteins or proteolytically cleaved forms. The DCX(DCAF12) complex specifically recognizes proteins with a diglutamate (Glu-Glu) at the C-terminus, such as MAGEA3, MAGEA6 and CCT5, leading to their ubiquitination and degradation. Ubiquitination of MAGEA3, MAGEA6 by DCX(DCAF12) complex is required for starvation-induced autophagy. Also directly recognizes the C-terminal glutamate-leucine (Glu-Leu) degron as an alternative degron in proteins such as MOV10, leading to their ubiquitination and degradation. Controls the protein level of MOV10 during spermatogenesis and in T cells, especially after their activation. In Homo sapiens (Human), this protein is DDB1- and CUL4-associated factor 12.